Here is an 88-residue protein sequence, read N- to C-terminus: Small ribosomal subunit protein uS17 (88 aa).

It belongs to the universal ribosomal protein uS17 family. Part of the 30S ribosomal subunit.

Its function is as follows. One of the primary rRNA binding proteins, it binds specifically to the 5'-end of 16S ribosomal RNA. The chain is Small ribosomal subunit protein uS17 from Nitrosospira multiformis (strain ATCC 25196 / NCIMB 11849 / C 71).